A 341-amino-acid chain; its full sequence is DNA-directed RNA polymerase subunit alpha (341 aa).

The segment at 1 to 233 is alpha N-terminal domain (alpha-NTD); sequence MLKDGTSVSN…DLLSPFLHTK (233 aa). Positions 262 to 341 are alpha C-terminal domain (alpha-CTD); sequence SEGDFFKNTF…NEKPRVVGDE (80 aa).

Belongs to the RNA polymerase alpha chain family. In terms of assembly, in plastids the minimal PEP RNA polymerase catalytic core is composed of four subunits: alpha, beta, beta', and beta''. When a (nuclear-encoded) sigma factor is associated with the core the holoenzyme is formed, which can initiate transcription.

The protein localises to the plastid. It is found in the chloroplast. The enzyme catalyses RNA(n) + a ribonucleoside 5'-triphosphate = RNA(n+1) + diphosphate. Functionally, DNA-dependent RNA polymerase catalyzes the transcription of DNA into RNA using the four ribonucleoside triphosphates as substrates. The chain is DNA-directed RNA polymerase subunit alpha from Marsilea quadrifolia (European water clover).